We begin with the raw amino-acid sequence, 661 residues long: Fusaric acid cluster transcription factor FUB12 (661 aa).

A DNA-binding region (zn(2)-C6 fungal-type) is located at residues 17 to 48 (CVPCRTRKIKCNAAVVGLPCGSCVSRECPDEC). Disordered regions lie at residues 57 to 131 (TVKG…RPPG) and 151 to 185 (SAAQTDASDHQSNDEPDDSFNSQIHHWNPPPQLDD). Residues 73-98 (PDTNGSILSPRQQQLPTNVSRQTTDS) are compositionally biased toward polar residues. Residues 99–109 (SHSDPVEESIH) show a composition bias toward basic and acidic residues. The span at 110–119 (ASHTGSSLRN) shows a compositional bias: polar residues. A compositionally biased stretch (basic and acidic residues) spans 120-129 (DTPHSRDRRP).

The protein resides in the nucleus. In terms of biological role, transcription factor that is involved in the formation of the two Fusaric acid derivatives, dehydrofusaric acid and fusarinolic acid, serving as a detoxification mechanism. This Gibberella fujikuroi (strain CBS 195.34 / IMI 58289 / NRRL A-6831) (Bakanae and foot rot disease fungus) protein is Fusaric acid cluster transcription factor FUB12.